Here is a 682-residue protein sequence, read N- to C-terminus: Protein SYG1 homolog (682 aa).

Positions 1–219 constitute an SPX domain; it reads MKFGKVIEGQ…HTDLQGFWVD (219 aa). Residues 1-274 lie on the Cytoplasmic side of the membrane; it reads MKFGKVIEGQ…KEHFSANSMR (274 aa). A helical membrane pass occupies residues 275–295; that stretch reads FGLLFGAGLPLAIEAACYYNA. Residues 296 to 300 lie on the Extracellular side of the membrane; that stretch reads TEQSS. Residues 301-321 traverse the membrane as a helical segment; that stretch reads YLLQIWGGFFLVIFAFVLFDL. Over 322 to 348 the chain is Cytoplasmic; the sequence is DCYVWEKTRVNYMLIFEFNQRKSLNWR. The chain crosses the membrane as a helical span at residues 349–369; it reads QHLEIVGAVFFIFSLFFFLCM. Topologically, residues 370–377 are extracellular; the sequence is RNFFPGFT. A helical transmembrane segment spans residues 378–398; sequence IYFPALFLGVVGTFLIAPVIV. Residues 399 to 406 are Cytoplasmic-facing; sequence PYWRMRRY. The chain crosses the membrane as a helical span at residues 407–424; sequence LIIQLIRVFLSGLSTVHF. The Extracellular segment spans residues 425–426; it reads QD. A helical membrane pass occupies residues 427–447; sequence FFFADQMVSLTYACGNISLFF. Over 448–525 the chain is Cytoplasmic; that stretch reads CLYKRLWRQP…WRIHPGLKYR (78 aa). The region spanning 459–654 is the EXS domain; the sequence is LCNSSHSPLL…VKPHSDVFVS (196 aa). Residues 526–546 traverse the membrane as a helical segment; that stretch reads VLYTIFAGVNSLFSYTWDILM. The Extracellular segment spans residues 547–571; the sequence is DWNLLVRKDGRWQFREHRILKQLWP. A helical transmembrane segment spans residues 572–592; that stretch reads YIIAMILNFIVRSSFIFYCIF. The Cytoplasmic segment spans residues 593–682; sequence PNHIQHSSGI…QTDVDEAQFS (90 aa). Residues 659-682 are disordered; the sequence is SDKNYTDDEDSMDDQTDVDEAQFS. Positions 665-682 are enriched in acidic residues; the sequence is DDEDSMDDQTDVDEAQFS.

The protein belongs to the SYG1 (TC 2.A.94) family.

The protein localises to the cell membrane. Its function is as follows. May function in G-protein coupled signal transduction. In Schizosaccharomyces pombe (strain 972 / ATCC 24843) (Fission yeast), this protein is Protein SYG1 homolog.